Here is a 200-residue protein sequence, read N- to C-terminus: Superoxide dismutase [Mn] 1 (200 aa).

Residues His29, His76, Asp158, and His162 each contribute to the Mn(2+) site.

This sequence belongs to the iron/manganese superoxide dismutase family. It depends on Mn(2+) as a cofactor.

It carries out the reaction 2 superoxide + 2 H(+) = H2O2 + O2. Destroys superoxide anion radicals which are normally produced within the cells and which are toxic to biological systems. This Haloferax volcanii (strain ATCC 29605 / DSM 3757 / JCM 8879 / NBRC 14742 / NCIMB 2012 / VKM B-1768 / DS2) (Halobacterium volcanii) protein is Superoxide dismutase [Mn] 1 (sod1).